Reading from the N-terminus, the 476-residue chain is tRNA-2-methylthio-N(6)-dimethylallyladenosine synthase (476 aa).

A compositionally biased stretch (basic and acidic residues) spans 1–14; that stretch reads MTEVVHLHMPEEAR. Residues 1–20 form a disordered region; sequence MTEVVHLHMPEEARATQSRD. The region spanning 26–147 is the MTTase N-terminal domain; the sequence is RRYYVWTVGC…APNPIYQLEE (122 aa). [4Fe-4S] cluster-binding residues include Cys-35, Cys-71, Cys-105, Cys-170, Cys-174, and Cys-177. The region spanning 156-390 is the Radical SAM core domain; sequence DHPPVSVHVP…ERLQEQIAAE (235 aa). The TRAM domain occupies 393 to 453; the sequence is ARFLHQTVEV…PWSLQGVLAR (61 aa).

It belongs to the methylthiotransferase family. MiaB subfamily. In terms of assembly, monomer. The cofactor is [4Fe-4S] cluster.

The protein localises to the cytoplasm. The catalysed reaction is N(6)-dimethylallyladenosine(37) in tRNA + (sulfur carrier)-SH + AH2 + 2 S-adenosyl-L-methionine = 2-methylsulfanyl-N(6)-dimethylallyladenosine(37) in tRNA + (sulfur carrier)-H + 5'-deoxyadenosine + L-methionine + A + S-adenosyl-L-homocysteine + 2 H(+). Functionally, catalyzes the methylthiolation of N6-(dimethylallyl)adenosine (i(6)A), leading to the formation of 2-methylthio-N6-(dimethylallyl)adenosine (ms(2)i(6)A) at position 37 in tRNAs that read codons beginning with uridine. This Roseiflexus sp. (strain RS-1) protein is tRNA-2-methylthio-N(6)-dimethylallyladenosine synthase.